An 876-amino-acid chain; its full sequence is Phosphoenolpyruvate carboxylase (876 aa).

Residues His138 and Lys543 contribute to the active site.

It belongs to the PEPCase type 1 family. Requires Mg(2+) as cofactor.

The enzyme catalyses oxaloacetate + phosphate = phosphoenolpyruvate + hydrogencarbonate. Functionally, forms oxaloacetate, a four-carbon dicarboxylic acid source for the tricarboxylic acid cycle. This Pseudomonas fluorescens (strain ATCC BAA-477 / NRRL B-23932 / Pf-5) protein is Phosphoenolpyruvate carboxylase.